A 370-amino-acid chain; its full sequence is Biotin synthase (370 aa).

Positions 79–314 constitute a Radical SAM core domain; sequence CCGNVVDLCS…KQIIRYAGGR (236 aa). The [4Fe-4S] cluster site is built by Cys97, Cys101, and Cys104. Residues Cys142, Cys179, Cys239, and Arg309 each contribute to the [2Fe-2S] cluster site.

It belongs to the radical SAM superfamily. Biotin synthase family. As to quaternary structure, homodimer. [4Fe-4S] cluster serves as cofactor. It depends on [2Fe-2S] cluster as a cofactor.

It catalyses the reaction (4R,5S)-dethiobiotin + (sulfur carrier)-SH + 2 reduced [2Fe-2S]-[ferredoxin] + 2 S-adenosyl-L-methionine = (sulfur carrier)-H + biotin + 2 5'-deoxyadenosine + 2 L-methionine + 2 oxidized [2Fe-2S]-[ferredoxin]. Its pathway is cofactor biosynthesis; biotin biosynthesis; biotin from 7,8-diaminononanoate: step 2/2. In terms of biological role, catalyzes the conversion of dethiobiotin (DTB) to biotin by the insertion of a sulfur atom into dethiobiotin via a radical-based mechanism. This chain is Biotin synthase, found in Trichodesmium erythraeum (strain IMS101).